The sequence spans 216 residues: Pyridoxine/pyridoxamine 5'-phosphate oxidase 1 (216 aa).

Substrate is bound by residues 10-13 (RREY) and Lys68. FMN-binding positions include 63-68 (RIVLLK), 78-79 (YT), Lys85, and Gln107. Substrate contacts are provided by Tyr125, Arg129, and Ser133. FMN-binding positions include 142–143 (QS) and Trp186. 192-194 (RLH) contributes to the substrate binding site. An FMN-binding site is contributed by Arg196.

This sequence belongs to the pyridoxamine 5'-phosphate oxidase family. In terms of assembly, homodimer. Requires FMN as cofactor.

The catalysed reaction is pyridoxamine 5'-phosphate + O2 + H2O = pyridoxal 5'-phosphate + H2O2 + NH4(+). The enzyme catalyses pyridoxine 5'-phosphate + O2 = pyridoxal 5'-phosphate + H2O2. It functions in the pathway cofactor metabolism; pyridoxal 5'-phosphate salvage; pyridoxal 5'-phosphate from pyridoxamine 5'-phosphate: step 1/1. It participates in cofactor metabolism; pyridoxal 5'-phosphate salvage; pyridoxal 5'-phosphate from pyridoxine 5'-phosphate: step 1/1. Its function is as follows. Catalyzes the oxidation of either pyridoxine 5'-phosphate (PNP) or pyridoxamine 5'-phosphate (PMP) into pyridoxal 5'-phosphate (PLP). The chain is Pyridoxine/pyridoxamine 5'-phosphate oxidase 1 from Hydrogenovibrio crunogenus (strain DSM 25203 / XCL-2) (Thiomicrospira crunogena).